The primary structure comprises 189 residues: Ribosome maturation factor RimM (189 aa).

The 83-residue stretch at 95-177 (EDDEFYYADL…AGLVDDPEEL (83 aa)) folds into the PRC barrel domain.

It belongs to the RimM family. In terms of assembly, binds ribosomal protein uS19.

Its subcellular location is the cytoplasm. In terms of biological role, an accessory protein needed during the final step in the assembly of 30S ribosomal subunit, possibly for assembly of the head region. Essential for efficient processing of 16S rRNA. May be needed both before and after RbfA during the maturation of 16S rRNA. It has affinity for free ribosomal 30S subunits but not for 70S ribosomes. This chain is Ribosome maturation factor RimM, found in Rhizobium leguminosarum bv. trifolii (strain WSM2304).